We begin with the raw amino-acid sequence, 379 residues long: Pectin lyase A (379 aa).

The signal sequence occupies residues 1–20 (MKTTFLVSLATAALSSTAAA). Cystine bridges form between Cys83–Cys102 and Cys92–Cys226. The active site involves Arg256. Cys323 and Cys331 are disulfide-bonded.

The protein belongs to the polysaccharide lyase 1 family.

The protein resides in the secreted. It carries out the reaction Eliminative cleavage of (1-&gt;4)-alpha-D-galacturonan methyl ester to give oligosaccharides with 4-deoxy-6-O-methyl-alpha-D-galact-4-enuronosyl groups at their non-reducing ends.. Functionally, pectinolytic enzymes consist of four classes of enzymes: pectin lyase, polygalacturonase, pectin methylesterase and rhamnogalacturonase. Among pectinolytic enzymes, pectin lyase is the most important in depolymerization of pectin, since it cleaves internal glycosidic bonds of highly methylated pectins. The protein is Pectin lyase A (pelA) of Emericella nidulans (strain FGSC A4 / ATCC 38163 / CBS 112.46 / NRRL 194 / M139) (Aspergillus nidulans).